A 203-amino-acid chain; its full sequence is V-type ATP synthase subunit D (203 aa).

Belongs to the V-ATPase D subunit family.

Functionally, produces ATP from ADP in the presence of a proton gradient across the membrane. The chain is V-type ATP synthase subunit D from Streptococcus pneumoniae (strain Hungary19A-6).